The following is a 184-amino-acid chain: ATP synthase subunit delta (184 aa).

It belongs to the ATPase delta chain family. In terms of assembly, F-type ATPases have 2 components, F(1) - the catalytic core - and F(0) - the membrane proton channel. F(1) has five subunits: alpha(3), beta(3), gamma(1), delta(1), epsilon(1). F(0) has three main subunits: a(1), b(2) and c(10-14). The alpha and beta chains form an alternating ring which encloses part of the gamma chain. F(1) is attached to F(0) by a central stalk formed by the gamma and epsilon chains, while a peripheral stalk is formed by the delta and b chains.

It is found in the cell inner membrane. F(1)F(0) ATP synthase produces ATP from ADP in the presence of a proton or sodium gradient. F-type ATPases consist of two structural domains, F(1) containing the extramembraneous catalytic core and F(0) containing the membrane proton channel, linked together by a central stalk and a peripheral stalk. During catalysis, ATP synthesis in the catalytic domain of F(1) is coupled via a rotary mechanism of the central stalk subunits to proton translocation. Its function is as follows. This protein is part of the stalk that links CF(0) to CF(1). It either transmits conformational changes from CF(0) to CF(1) or is implicated in proton conduction. The polypeptide is ATP synthase subunit delta (Dichelobacter nodosus (strain VCS1703A)).